Consider the following 157-residue polypeptide: MTRDEKAKIVAELTDGFKNSEAVLVSDFKGLSVKALENLRNNAREVDVKVQVVKNTLANIALKNASKDGMELKDTNIFLWGNQIDVCKVAAKFEEQNESFKIKTAYMDGEVASLSKIVALSKLPSRDELIAMLLQVWNAPIQNFTIGLNALKEKKSA.

Belongs to the universal ribosomal protein uL10 family. Part of the ribosomal stalk of the 50S ribosomal subunit. The N-terminus interacts with L11 and the large rRNA to form the base of the stalk. The C-terminus forms an elongated spine to which L12 dimers bind in a sequential fashion forming a multimeric L10(L12)X complex.

Functionally, forms part of the ribosomal stalk, playing a central role in the interaction of the ribosome with GTP-bound translation factors. This is Large ribosomal subunit protein uL10 from Campylobacter hominis (strain ATCC BAA-381 / DSM 21671 / CCUG 45161 / LMG 19568 / NCTC 13146 / CH001A).